The chain runs to 173 residues: MEKQKDNVTSTKEEILCTKKEQNIDMEKFNSIGFLNEFCHKNKYKPPSYTTLNQNGPDHSPTFNIECRIVDYKPNGKFIGSGLSMKEAKKNAAFKTIKELNLLTLNTENKSSFRVVEIIPYIEKEPHEDEGLLCMWNGDCKKIKITLRKKDGSIQKFKSFLLKIEDSVDIDDI.

Residues 30–102 (NSIGFLNEFC…AFKTIKELNL (73 aa)) enclose the DRBM domain.

The polypeptide is DRBM domain-containing protein 340R (Invertebrate iridescent virus 6 (IIV-6)).